Here is an 88-residue protein sequence, read N- to C-terminus: Small ribosomal subunit protein uS15 (88 aa).

It belongs to the universal ribosomal protein uS15 family. Part of the 30S ribosomal subunit. Forms a bridge to the 50S subunit in the 70S ribosome, contacting the 23S rRNA.

Functionally, one of the primary rRNA binding proteins, it binds directly to 16S rRNA where it helps nucleate assembly of the platform of the 30S subunit by binding and bridging several RNA helices of the 16S rRNA. In terms of biological role, forms an intersubunit bridge (bridge B4) with the 23S rRNA of the 50S subunit in the ribosome. This chain is Small ribosomal subunit protein uS15, found in Borreliella burgdorferi (strain ATCC 35210 / DSM 4680 / CIP 102532 / B31) (Borrelia burgdorferi).